Here is a 430-residue protein sequence, read N- to C-terminus: Serine/threonine-protein kinase Sgk1 (430 aa).

The segment at methionine 1–isoleucine 60 is necessary for localization to the mitochondria. The disordered stretch occupies residues proline 66 to histidine 92. Position 74 is a phosphoserine (serine 74). At serine 78 the chain carries Phosphoserine; by MAPK7. A compositionally biased stretch (polar residues) spans glutamine 81–proline 91. In terms of domain architecture, Protein kinase spans phenylalanine 98–phenylalanine 354. Residues isoleucine 104–valine 112 and lysine 127 contribute to the ATP site. The Nuclear localization signal motif lies at lysine 131–lysine 141. Aspartate 222 acts as the Proton acceptor in catalysis. Phosphothreonine; by PDPK1 is present on threonine 256. One can recognise an AGC-kinase C-terminal domain in the interval serine 355–leucine 430. Threonine 368 carries the phosphothreonine; by PKA modification. Phosphoserine occurs at positions 396, 400, and 421.

This sequence belongs to the protein kinase superfamily. AGC Ser/Thr protein kinase family. In terms of assembly, homodimer; disulfide-linked. Forms a trimeric complex with FBXW7 and NOTCH1. Interacts with MAPK3/ERK1, MAPK1/ERK2, MAP2K1/MEK1, MAP2K2/MEK2, NEDD4, NEDD4L, MAPK7, CREB1, SLC9A3R2/NHERF2 and KCNJ1/ROMK1. Associates with the mammalian target of rapamycin complex 2 (mTORC2) via an interaction with MAPKAP1/SIN1. Interacts with MAPT/TAU. Post-translationally, regulated by phosphorylation. Activated by phosphorylation on Ser-421 by mTORC2, transforming it into a substrate for PDPK1 which phosphorylates it on Thr-256. Phosphorylation on Ser-396 and Ser-400 are also essential for its activity. Phosphorylation on Ser-78 by MAPK7 is required for growth factor-induced cell cycle progression. In terms of processing, ubiquitinated by NEDD4L; which promotes proteasomal degradation. Ubiquitinated by SYVN1 at the endoplasmic reticulum; which promotes rapid proteasomal degradation and maintains a high turnover rate in resting cells. In terms of tissue distribution, expressed in most tissues with highest levels in the ovary, thymus and lung. In the kidney, expressed within glomeruli of the cortex, at low levels in outer medulla and moderate levels in inner medulla and papilla.

The protein resides in the cytoplasm. The protein localises to the nucleus. Its subcellular location is the endoplasmic reticulum membrane. It is found in the cell membrane. It localises to the mitochondrion. The enzyme catalyses L-seryl-[protein] + ATP = O-phospho-L-seryl-[protein] + ADP + H(+). It carries out the reaction L-threonyl-[protein] + ATP = O-phospho-L-threonyl-[protein] + ADP + H(+). With respect to regulation, two specific sites, one in the kinase domain (Thr-256) and the other in the C-terminal regulatory region (Ser-421), need to be phosphorylated for its full activation. Phosphorylation at Ser-396 and Ser-400 are also essential for its activity. Activated by WNK1, WNK2, WNK3 and WNK4. Functionally, serine/threonine-protein kinase which is involved in the regulation of a wide variety of ion channels, membrane transporters, cellular enzymes, transcription factors, neuronal excitability, cell growth, proliferation, survival, migration and apoptosis. Plays an important role in cellular stress response. Contributes to regulation of renal Na(+) retention, renal K(+) elimination, salt appetite, gastric acid secretion, intestinal Na(+)/H(+) exchange and nutrient transport, insulin-dependent salt sensitivity of blood pressure, salt sensitivity of peripheral glucose uptake, cardiac repolarization and memory consolidation. Up-regulates Na(+) channels: SCNN1A/ENAC, SCN5A and ASIC1/ACCN2, K(+) channels: KCNJ1/ROMK1, KCNA1-5, KCNQ1-5 and KCNE1, epithelial Ca(2+) channels: TRPV5 and TRPV6, chloride channels: BSND, CLCN2 and CFTR, glutamate transporters: SLC1A3/EAAT1, SLC1A2 /EAAT2, SLC1A1/EAAT3, SLC1A6/EAAT4 and SLC1A7/EAAT5, amino acid transporters: SLC1A5/ASCT2, SLC38A1/SN1 and SLC6A19, creatine transporter: SLC6A8, Na(+)/dicarboxylate cotransporter: SLC13A2/NADC1, Na(+)-dependent phosphate cotransporter: SLC34A2/NAPI-2B, glutamate receptor: GRIK2/GLUR6. Up-regulates carriers: SLC9A3/NHE3, SLC12A1/NKCC2, SLC12A3/NCC, SLC5A3/SMIT, SLC2A1/GLUT1, SLC5A1/SGLT1 and SLC15A2/PEPT2. Regulates enzymes: GSK3A/B, PMM2 and Na(+)/K(+) ATPase, and transcription factors: CTNNB1 and nuclear factor NF-kappa-B. Stimulates sodium transport into epithelial cells by enhancing the stability and expression of SCNN1A/ENAC. This is achieved by phosphorylating the NEDD4L ubiquitin E3 ligase, promoting its interaction with 14-3-3 proteins, thereby preventing it from binding to SCNN1A/ENAC and targeting it for degradation. Regulates store-operated Ca(+2) entry (SOCE) by stimulating ORAI1 and STIM1. Regulates KCNJ1/ROMK1 directly via its phosphorylation or indirectly via increased interaction with SLC9A3R2/NHERF2. Phosphorylates MDM2 and activates MDM2-dependent ubiquitination of p53/TP53. Phosphorylates SLC2A4/GLUT4 and up-regulates its activity. Phosphorylates APBB1/FE65 and promotes its localization to the nucleus. Phosphorylates FBXW7 and plays an inhibitory role in the NOTCH1 signaling. Phosphorylates FOXO1 resulting in its relocalization from the nucleus to the cytoplasm. Phosphorylates FOXO3, promoting its exit from the nucleus and interference with FOXO3-dependent transcription. Phosphorylates BRAF and MAP3K3/MEKK3 and inhibits their activity. Phosphorylates SLC9A3/NHE3 in response to dexamethasone, resulting in its activation and increased localization at the cell membrane. Phosphorylates CREB1. Necessary for vascular remodeling during angiogenesis. Phosphorylates MAPT/TAU and mediates microtubule depolymerization and neurite formation in hippocampal neurons. Phosphorylates MAPK1/ERK2 and activates it by enhancing its interaction with MAP2K1/MEK1 and MAP2K2/MEK2. May also play an important role in the development of particular groups of neurons in the postnatal brain. This Rattus norvegicus (Rat) protein is Serine/threonine-protein kinase Sgk1 (Sgk1).